A 21-amino-acid chain; its full sequence is GMASTAGSVLGKLAKVAIGAL.

At L21 the chain carries Leucine amide.

In terms of tissue distribution, expressed by the skin glands.

Its subcellular location is the secreted. Functionally, antimicrobial peptide. This Xenopus ruwenzoriensis (Uganda clawed frog) protein is Peptide PGLa-R5.